A 393-amino-acid polypeptide reads, in one-letter code: Lipid-A-disaccharide synthase (393 aa).

The protein belongs to the LpxB family.

It catalyses the reaction a lipid X + a UDP-2-N,3-O-bis[(3R)-3-hydroxyacyl]-alpha-D-glucosamine = a lipid A disaccharide + UDP + H(+). Its pathway is bacterial outer membrane biogenesis; LPS lipid A biosynthesis. In terms of biological role, condensation of UDP-2,3-diacylglucosamine and 2,3-diacylglucosamine-1-phosphate to form lipid A disaccharide, a precursor of lipid A, a phosphorylated glycolipid that anchors the lipopolysaccharide to the outer membrane of the cell. This chain is Lipid-A-disaccharide synthase, found in Actinobacillus pleuropneumoniae serotype 3 (strain JL03).